The primary structure comprises 97 residues: MNKSMLIFFTILFLTYIIEEKEALKVEDLPEPESYKRAKQLAVKDAKGDKNAETIALNFLKQNRRDCMKNCKLVPTCALLSPECCPDKTDVCKKLAL.

Positions 1–23 are cleaved as a signal peptide; it reads MNKSMLIFFTILFLTYIIEEKEA.

In terms of processing, contains 3 disulfide bonds. In terms of tissue distribution, expressed by the venom gland.

The protein localises to the secreted. The sequence is that of U-scoloptoxin(10)-Ssd2a from Scolopendra dehaani (Thai centipede).